A 521-amino-acid chain; its full sequence is Ribonuclease Y (521 aa).

A helical membrane pass occupies residues 5–25 (TVWILISILLATVGAVVGFFV). Positions 87 to 117 (KQENRLMQKEENLDRKDETLDNRERQLEKKE) are disordered. The KH domain maps to 211 to 274 (TVSVVNLPND…ETARIALDKL (64 aa)). Residues 337 to 430 (VLKHSMEVAY…VAAADALSAA (94 aa)) enclose the HD domain.

This sequence belongs to the RNase Y family.

Its subcellular location is the cell membrane. Endoribonuclease that initiates mRNA decay. This is Ribonuclease Y from Bacillus mycoides (strain KBAB4) (Bacillus weihenstephanensis).